We begin with the raw amino-acid sequence, 225 residues long: Urease accessory protein UreF (225 aa).

It belongs to the UreF family. UreD, UreF and UreG form a complex that acts as a GTP-hydrolysis-dependent molecular chaperone, activating the urease apoprotein by helping to assemble the nickel containing metallocenter of UreC. The UreE protein probably delivers the nickel.

It localises to the cytoplasm. Required for maturation of urease via the functional incorporation of the urease nickel metallocenter. The sequence is that of Urease accessory protein UreF from Picosynechococcus sp. (strain ATCC 27264 / PCC 7002 / PR-6) (Agmenellum quadruplicatum).